Reading from the N-terminus, the 510-residue chain is Zinc finger and SCAN domain-containing protein 18 (510 aa).

The disordered stretch occupies residues 1–40; the sequence is MLPLEKAFASPRSSPAPPDLPTPGSAAGVQQEEPETIPER. The 83-residue stretch at 49–131 folds into the SCAN box domain; it reads RLRFREFVYQ…SLVEGLADVL (83 aa). 4 disordered regions span residues 172–191, 201–231, 263–413, and 461–510; these read ALGA…SPDP, EAKT…EWGH, TEEL…GKPY, and KTHE…EAQR. 2 stretches are compositionally biased toward basic and acidic residues: residues 214-231 and 263-273; these read QKLK…EWGH and TEELRLVERDP. Low complexity predominate over residues 288–299; the sequence is AGCACEEAAPAG. Positions 344-356 are enriched in polar residues; it reads DSATGSQRQSVIQ. 2 C2H2-type zinc fingers span residues 413 to 435 and 441 to 463; these read YACG…HSSH and YACQ…QKTH. Over residues 491–501 the composition is skewed to low complexity; it reads GGPPESVEGEA.

This sequence belongs to the krueppel C2H2-type zinc-finger protein family.

Its subcellular location is the nucleus. Its function is as follows. May be involved in transcriptional regulation. This is Zinc finger and SCAN domain-containing protein 18 (ZSCAN18) from Homo sapiens (Human).